The chain runs to 228 residues: MQRPHRRQSQMDAASTRAPPRPSAPQQGRRQPSMPGSAQCHHRPDPHPPAPGKKKSSPVGRFFPASAMAPPWLPGIVSAAQLKPVLSDLPPHCTRAQCQPLTQRPHSLHLQDSRNASSLPHKGWRCNFPLQGPAGLTHKSACVGRMGHCCGSAGNVPELSPRPASPRGQQVTQDGPLQTPELPSECNVGPVMSRQPFPEQSQQGECAIDPRGPPRLELSWGEDPLSGV.

Disordered regions lie at residues 1–62 (MQRP…VGRF) and 160–228 (SPRP…LSGV). Residues 13–33 (AASTRAPPRPSAPQQGRRQPS) are compositionally biased toward low complexity. Over residues 167–176 (RGQQVTQDGP) the composition is skewed to polar residues.

This is an uncharacterized protein from Homo sapiens (Human).